A 306-amino-acid polypeptide reads, in one-letter code: Erythromycin 3''-O-methyltransferase (306 aa).

Residues Leu157 and His162 each contribute to the S-adenosyl-L-methionine site.

Belongs to the methyltransferase superfamily.

The catalysed reaction is erythromycin C + S-adenosyl-L-methionine = erythromycin A + S-adenosyl-L-homocysteine + H(+). The enzyme catalyses erythromycin D + S-adenosyl-L-methionine = erythromycin B + S-adenosyl-L-homocysteine + H(+). It participates in antibiotic biosynthesis; erythromycin biosynthesis. Its function is as follows. S-adenosyl-L-methionine-dependent O-methyltransferase that catalyzes the last step in the erythromycin biosynthesis pathway. Methylates the position 3 of the mycarosyl moiety of erythromycin C, forming the most active form of the antibiotic, erythromycin A. Can also methylate the precursor erythromycin D, forming erythromycin B. The polypeptide is Erythromycin 3''-O-methyltransferase (eryG) (Saccharopolyspora erythraea (strain ATCC 11635 / DSM 40517 / JCM 4748 / NBRC 13426 / NCIMB 8594 / NRRL 2338)).